The primary structure comprises 149 residues: 3-dehydroquinate dehydratase (149 aa).

The active-site Proton acceptor is Y26. Positions 77, 83, and 90 each coordinate substrate. H103 functions as the Proton donor in the catalytic mechanism. Residues L104 to S105 and R114 each bind substrate.

This sequence belongs to the type-II 3-dehydroquinase family. As to quaternary structure, homododecamer.

The catalysed reaction is 3-dehydroquinate = 3-dehydroshikimate + H2O. It participates in metabolic intermediate biosynthesis; chorismate biosynthesis; chorismate from D-erythrose 4-phosphate and phosphoenolpyruvate: step 3/7. Its function is as follows. Catalyzes a trans-dehydration via an enolate intermediate. This is 3-dehydroquinate dehydratase from Haemophilus influenzae (strain PittEE).